Reading from the N-terminus, the 451-residue chain is Phosphoglucosamine mutase (451 aa).

Ser101 functions as the Phosphoserine intermediate in the catalytic mechanism. Mg(2+) contacts are provided by Ser101, Asp241, Asp243, and Asp245. Ser101 is modified (phosphoserine).

The protein belongs to the phosphohexose mutase family. Requires Mg(2+) as cofactor. In terms of processing, activated by phosphorylation.

The catalysed reaction is alpha-D-glucosamine 1-phosphate = D-glucosamine 6-phosphate. Its function is as follows. Catalyzes the conversion of glucosamine-6-phosphate to glucosamine-1-phosphate. The chain is Phosphoglucosamine mutase from Exiguobacterium sibiricum (strain DSM 17290 / CCUG 55495 / CIP 109462 / JCM 13490 / 255-15).